We begin with the raw amino-acid sequence, 239 residues long: Leucyl/phenylalanyl-tRNA--protein transferase (239 aa).

This sequence belongs to the L/F-transferase family.

The protein resides in the cytoplasm. It carries out the reaction N-terminal L-lysyl-[protein] + L-leucyl-tRNA(Leu) = N-terminal L-leucyl-L-lysyl-[protein] + tRNA(Leu) + H(+). The catalysed reaction is N-terminal L-arginyl-[protein] + L-leucyl-tRNA(Leu) = N-terminal L-leucyl-L-arginyl-[protein] + tRNA(Leu) + H(+). The enzyme catalyses L-phenylalanyl-tRNA(Phe) + an N-terminal L-alpha-aminoacyl-[protein] = an N-terminal L-phenylalanyl-L-alpha-aminoacyl-[protein] + tRNA(Phe). Functions in the N-end rule pathway of protein degradation where it conjugates Leu, Phe and, less efficiently, Met from aminoacyl-tRNAs to the N-termini of proteins containing an N-terminal arginine or lysine. In Syntrophus aciditrophicus (strain SB), this protein is Leucyl/phenylalanyl-tRNA--protein transferase.